An 868-amino-acid polypeptide reads, in one-letter code: DNA mismatch repair protein MutS (868 aa).

Residue 620 to 627 coordinates ATP; that stretch reads GPNMGGKS.

Belongs to the DNA mismatch repair MutS family.

In terms of biological role, this protein is involved in the repair of mismatches in DNA. It is possible that it carries out the mismatch recognition step. This protein has a weak ATPase activity. The sequence is that of DNA mismatch repair protein MutS from Xylella fastidiosa (strain Temecula1 / ATCC 700964).